The sequence spans 1216 residues: Probable phospholipid-transporting ATPase 4 (1216 aa).

Residues 1–74 (MARGRIRSKL…TTRYNLITFF (74 aa)) lie on the Cytoplasmic side of the membrane. Residues 75–96 (PKCLYEQFHRAANFYFLVAAIL) form a helical membrane-spanning segment. At 97–100 (SVFP) the chain is on the extracellular side. A helical membrane pass occupies residues 101–123 (LSPFNKWSMIAPLVFVVGLSMLK). The Cytoplasmic portion of the chain corresponds to 124 to 305 (EALEDWSRFM…SRIEKTMDYI (182 aa)). The helical transmembrane segment at 306-327 (IYTLLVLLILISCISSSGFAWE) threads the bilayer. At 328-359 (TKFHMPKWWYLRPEEPENLTNPSNPVYAGFVH) the chain is on the extracellular side. The helical transmembrane segment at 360–377 (LITALLLYGYLIPISLYV) threads the bilayer. Topologically, residues 378 to 922 (SIEVVKVLQA…HGHWCYKRIA (545 aa)) are cytoplasmic. Asp-425 functions as the 4-aspartylphosphate intermediate in the catalytic mechanism. Lys-605 participates in a covalent cross-link: Glycyl lysine isopeptide (Lys-Gly) (interchain with G-Cter in ubiquitin). Mg(2+) contacts are provided by Asp-867 and Asp-871. A helical transmembrane segment spans residues 923–942 (QMICYFFYKNIAFGLTLFYF). Residues 943–956 (EAFTGFSGQSVYND) are Extracellular-facing. Residues 957-976 (YYLLLFNVVLTSLPVIALGV) form a helical membrane-spanning segment. Residues 977 to 1006 (FEQDVSSEICLQFPALYQQGKKNLFFDWYR) are Cytoplasmic-facing. A helical membrane pass occupies residues 1007-1029 (ILGWMGNGVYSSLVIFFLNIGII). Residues 1030 to 1042 (YEQAFRVSGQTAD) are Extracellular-facing. A helical membrane pass occupies residues 1043–1065 (MDAVGTTMFTCIIWAVNVQIALT). Over 1066-1071 (VSHFTW) the chain is Cytoplasmic. Residues 1072–1092 (IQHVLIWGSIGLWYLFVALYG) form a helical membrane-spanning segment. Topologically, residues 1093 to 1109 (MMPPSLSGNIYRILVEI) are extracellular. A helical transmembrane segment spans residues 1110–1134 (LAPAPIYWIATFLVTVTTVLPYFAH). The Cytoplasmic segment spans residues 1135 to 1216 (ISFQRFLHPL…TQDTMSPRSV (82 aa)). Residues 1195 to 1216 (LNKKQSNMSQFSTQDTMSPRSV) form a disordered region. The segment covering 1198–1216 (KQSNMSQFSTQDTMSPRSV) has biased composition (polar residues).

Belongs to the cation transport ATPase (P-type) (TC 3.A.3) family. Type IV subfamily.

The protein resides in the membrane. The enzyme catalyses ATP + H2O + phospholipidSide 1 = ADP + phosphate + phospholipidSide 2.. In terms of biological role, involved in transport of phospholipids. The chain is Probable phospholipid-transporting ATPase 4 from Arabidopsis thaliana (Mouse-ear cress).